An 867-amino-acid polypeptide reads, in one-letter code: Coiled-coil domain-containing protein 178 (867 aa).

Coiled-coil stretches lie at residues 153 to 204 (DEKC…KIDS), 233 to 414 (WHLE…ENQY), 445 to 470 (ACTK…TNES), and 662 to 696 (MIFY…KNKF).

This chain is Coiled-coil domain-containing protein 178 (CCDC178), found in Homo sapiens (Human).